Reading from the N-terminus, the 222-residue chain is Ras-related protein RABA4d (222 aa).

22-29 (GDSAVGKT) is a GTP binding site. Residues 44–52 (SKATIGVEF) carry the Effector region motif. GTP contacts are provided by residues 70–74 (DTAGQ), 128–131 (NKCD), and 158–159 (SA). Residues Cys-218 and Cys-219 are each lipidated (S-geranylgeranyl cysteine).

This sequence belongs to the small GTPase superfamily. Rab family. In terms of assembly, interacts with PI4KB1. In terms of tissue distribution, specifically expressed in pollen and localized to the tips of growing pollen tubes.

It is found in the cytoplasmic vesicle membrane. Functionally, intracellular vesicle trafficking and protein transport. Plays an important role in the regulation of pollen tube tip growth. The sequence is that of Ras-related protein RABA4d (RABA4D) from Arabidopsis thaliana (Mouse-ear cress).